The chain runs to 433 residues: Aspartate--tRNA(Asp/Asn) ligase (433 aa).

An L-aspartate-binding site is contributed by Glu167. The segment at 189–192 is aspartate; that stretch reads QLFK. Residue Arg211 participates in L-aspartate binding. Residues 211–213, 219–221, and Glu356 contribute to the ATP site; these read RAE and RHL. Mg(2+)-binding residues include Glu356 and Ser359. Positions 359 and 363 each coordinate L-aspartate. 404–407 lines the ATP pocket; the sequence is GGER.

The protein belongs to the class-II aminoacyl-tRNA synthetase family. Type 2 subfamily. As to quaternary structure, homodimer. It depends on Mg(2+) as a cofactor.

The protein resides in the cytoplasm. The catalysed reaction is tRNA(Asx) + L-aspartate + ATP = L-aspartyl-tRNA(Asx) + AMP + diphosphate. Functionally, aspartyl-tRNA synthetase with relaxed tRNA specificity since it is able to aspartylate not only its cognate tRNA(Asp) but also tRNA(Asn). Reaction proceeds in two steps: L-aspartate is first activated by ATP to form Asp-AMP and then transferred to the acceptor end of tRNA(Asp/Asn). This chain is Aspartate--tRNA(Asp/Asn) ligase, found in Natronomonas pharaonis (strain ATCC 35678 / DSM 2160 / CIP 103997 / JCM 8858 / NBRC 14720 / NCIMB 2260 / Gabara) (Halobacterium pharaonis).